A 47-amino-acid chain; its full sequence is Conotoxin reg3.11 (47 aa).

Positions 1–31 (DQPVERHAENKRHLIPAVMRAMTMNADRRVQ) are excised as a propeptide. 3 disulfide bridges follow: Cys32–Cys44, Cys33–Cys42, and Cys38–Cys45. The propeptide occupies 46 to 47 (YH).

This sequence belongs to the conotoxin M superfamily. In terms of tissue distribution, expressed by the venom duct.

The protein resides in the secreted. The chain is Conotoxin reg3.11 from Conus regius (Crown cone).